A 311-amino-acid polypeptide reads, in one-letter code: Porphobilinogen deaminase (311 aa).

Cys-241 is modified (S-(dipyrrolylmethanemethyl)cysteine).

Belongs to the HMBS family. Monomer. The cofactor is dipyrromethane.

It carries out the reaction 4 porphobilinogen + H2O = hydroxymethylbilane + 4 NH4(+). Its pathway is porphyrin-containing compound metabolism; protoporphyrin-IX biosynthesis; coproporphyrinogen-III from 5-aminolevulinate: step 2/4. Tetrapolymerization of the monopyrrole PBG into the hydroxymethylbilane pre-uroporphyrinogen in several discrete steps. The protein is Porphobilinogen deaminase of Campylobacter curvus (strain 525.92).